The primary structure comprises 469 residues: Glutamate--tRNA ligase (469 aa).

The short motif at 9–19 (PSPTGFLHVGG) is the 'HIGH' region element. 4 residues coordinate Zn(2+): Cys98, Cys100, Cys125, and Asp127. The 'KMSKS' region signature appears at 236 to 240 (KLSKR). ATP is bound at residue Lys239.

It belongs to the class-I aminoacyl-tRNA synthetase family. Glutamate--tRNA ligase type 1 subfamily. As to quaternary structure, monomer. Zn(2+) serves as cofactor.

The protein localises to the cytoplasm. The catalysed reaction is tRNA(Glu) + L-glutamate + ATP = L-glutamyl-tRNA(Glu) + AMP + diphosphate. Catalyzes the attachment of glutamate to tRNA(Glu) in a two-step reaction: glutamate is first activated by ATP to form Glu-AMP and then transferred to the acceptor end of tRNA(Glu). The polypeptide is Glutamate--tRNA ligase (Shewanella woodyi (strain ATCC 51908 / MS32)).